Consider the following 99-residue polypeptide: RNA-binding protein Hfq (99 aa).

In terms of domain architecture, Sm spans 9 to 68; sequence DPFLNALRRERVPVSIYLVNGIKLQGQIESFDQFVILLKNTVSQMVYKHAISTVVPSRPV. Positions 64 to 99 are disordered; it reads PSRPVSHHSNNPGGGSNYHGNNTAASQQSQEADDAE.

The protein belongs to the Hfq family. In terms of assembly, homohexamer.

Its function is as follows. RNA chaperone that binds small regulatory RNA (sRNAs) and mRNAs to facilitate mRNA translational regulation in response to envelope stress, environmental stress and changes in metabolite concentrations. Also binds with high specificity to tRNAs. The sequence is that of RNA-binding protein Hfq from Pectobacterium carotovorum subsp. carotovorum (strain PC1).